The chain runs to 307 residues: Elongation factor Ts (307 aa).

The tract at residues 79 to 82 (TDFV) is involved in Mg(2+) ion dislocation from EF-Tu.

The protein belongs to the EF-Ts family.

It localises to the cytoplasm. In terms of biological role, associates with the EF-Tu.GDP complex and induces the exchange of GDP to GTP. It remains bound to the aminoacyl-tRNA.EF-Tu.GTP complex up to the GTP hydrolysis stage on the ribosome. The chain is Elongation factor Ts from Bartonella henselae (strain ATCC 49882 / DSM 28221 / CCUG 30454 / Houston 1) (Rochalimaea henselae).